We begin with the raw amino-acid sequence, 131 residues long: Large ribosomal subunit protein bL19 (131 aa).

The protein belongs to the bacterial ribosomal protein bL19 family.

In terms of biological role, this protein is located at the 30S-50S ribosomal subunit interface and may play a role in the structure and function of the aminoacyl-tRNA binding site. This chain is Large ribosomal subunit protein bL19, found in Rhodopseudomonas palustris (strain BisA53).